A 483-amino-acid chain; its full sequence is 3-isopropylmalate dehydratase large subunit (483 aa).

Residues C361, C424, and C427 each coordinate [4Fe-4S] cluster.

This sequence belongs to the aconitase/IPM isomerase family. LeuC type 1 subfamily. As to quaternary structure, heterodimer of LeuC and LeuD. [4Fe-4S] cluster is required as a cofactor.

The enzyme catalyses (2R,3S)-3-isopropylmalate = (2S)-2-isopropylmalate. It participates in amino-acid biosynthesis; L-leucine biosynthesis; L-leucine from 3-methyl-2-oxobutanoate: step 2/4. Its function is as follows. Catalyzes the isomerization between 2-isopropylmalate and 3-isopropylmalate, via the formation of 2-isopropylmaleate. The chain is 3-isopropylmalate dehydratase large subunit from Polaromonas naphthalenivorans (strain CJ2).